The primary structure comprises 276 residues: Shikimate dehydrogenase (NADP(+)) (276 aa).

Shikimate is bound by residues 15 to 17 and Thr-63; that span reads SMS. Residue Lys-67 is the Proton acceptor of the active site. Asp-79 serves as a coordination point for NADP(+). Shikimate contacts are provided by Asn-88 and Asp-103. NADP(+)-binding positions include 130 to 134, 154 to 159, and Ile-217; these read GAGGA and NRTLSR. Tyr-219 is a shikimate binding site. Gly-240 serves as a coordination point for NADP(+).

This sequence belongs to the shikimate dehydrogenase family. In terms of assembly, homodimer.

It catalyses the reaction shikimate + NADP(+) = 3-dehydroshikimate + NADPH + H(+). It functions in the pathway metabolic intermediate biosynthesis; chorismate biosynthesis; chorismate from D-erythrose 4-phosphate and phosphoenolpyruvate: step 4/7. In terms of biological role, involved in the biosynthesis of the chorismate, which leads to the biosynthesis of aromatic amino acids. Catalyzes the reversible NADPH linked reduction of 3-dehydroshikimate (DHSA) to yield shikimate (SA). This chain is Shikimate dehydrogenase (NADP(+)), found in Oceanobacillus iheyensis (strain DSM 14371 / CIP 107618 / JCM 11309 / KCTC 3954 / HTE831).